Here is a 286-residue protein sequence, read N- to C-terminus: 33 kDa chaperonin (286 aa).

Disulfide bonds link cysteine 225-cysteine 227 and cysteine 258-cysteine 261.

Belongs to the HSP33 family. Post-translationally, under oxidizing conditions two disulfide bonds are formed involving the reactive cysteines. Under reducing conditions zinc is bound to the reactive cysteines and the protein is inactive.

The protein localises to the cytoplasm. Functionally, redox regulated molecular chaperone. Protects both thermally unfolding and oxidatively damaged proteins from irreversible aggregation. Plays an important role in the bacterial defense system toward oxidative stress. This Shewanella woodyi (strain ATCC 51908 / MS32) protein is 33 kDa chaperonin.